Consider the following 572-residue polypeptide: Linalool synthase TPS2, chloroplastic (572 aa).

A chloroplast-targeting transit peptide spans 1–27 (EVEEPKTKISASTAEASSSRISSAKMT). The segment at 1 to 45 (EVEEPKTKISASTAEASSSRISSAKMTADGTIKLGDQSPLKQSEK) is disordered. The segment covering 8 to 28 (KISASTAEASSSRISSAKMTA) has biased composition (low complexity). (2E)-geranyl diphosphate-binding residues include arginine 284, aspartate 321, aspartate 325, arginine 462, and asparagine 465. Positions 321 and 325 each coordinate Mg(2+). The DDXXD motif motif lies at 321–325 (DDVYD). Residues asparagine 465, threonine 469, and serine 473 each coordinate Mg(2+).

The protein belongs to the terpene synthase family. Tpsb subfamily. As to quaternary structure, monomer. Mg(2+) serves as cofactor. It depends on Mn(2+) as a cofactor. Expressed in flowers and fruits.

Its subcellular location is the plastid. The protein resides in the chloroplast. The catalysed reaction is (2E)-geranyl diphosphate = beta-myrcene + diphosphate. It carries out the reaction (2E)-geranyl diphosphate + H2O = linalool + diphosphate. It catalyses the reaction (2E)-geranyl diphosphate = (Z)-beta-ocimene + diphosphate. The enzyme catalyses (2E)-geranyl diphosphate = (E)-beta-ocimene + diphosphate. It participates in secondary metabolite biosynthesis; terpenoid biosynthesis. Monoterpene synthase (mono-TPS) involved in the biosynthesis of monoterpenes natural products, constituent of coffee beverage aroma. Catalyzes the conversion of (2E)-geranyl diphosphate (GPP) into linalool and beta-myrcene, and, as minor products, cis-ocimene and trans-ocimene. Not able to use geranylgeranyl pyrophosphate (GGPP) and farnesyl pyrophosphate (FPP) as substrates. The sequence is that of Linalool synthase TPS2, chloroplastic from Coffea arabica (Arabian coffee).